Reading from the N-terminus, the 434-residue chain is Adenylosuccinate synthetase (434 aa).

Residues glycine 12 to lysine 18 and glycine 40 to threonine 42 contribute to the GTP site. The active-site Proton acceptor is the aspartate 13. Mg(2+) contacts are provided by aspartate 13 and glycine 40. Residues aspartate 13–lysine 16, asparagine 38–histidine 41, threonine 129, arginine 143, glutamine 224, threonine 239, and arginine 303 each bind IMP. Residue histidine 41 is the Proton donor of the active site. Alanine 299–arginine 305 is a substrate binding site. GTP contacts are provided by residues arginine 305, lysine 331 to aspartate 333, and serine 413 to glycine 415.

This sequence belongs to the adenylosuccinate synthetase family. In terms of assembly, homodimer. The cofactor is Mg(2+).

The protein resides in the cytoplasm. It catalyses the reaction IMP + L-aspartate + GTP = N(6)-(1,2-dicarboxyethyl)-AMP + GDP + phosphate + 2 H(+). It participates in purine metabolism; AMP biosynthesis via de novo pathway; AMP from IMP: step 1/2. Plays an important role in the de novo pathway of purine nucleotide biosynthesis. Catalyzes the first committed step in the biosynthesis of AMP from IMP. The protein is Adenylosuccinate synthetase of Solibacter usitatus (strain Ellin6076).